The chain runs to 196 residues: Nodulation protein A (196 aa).

This sequence belongs to the NodA family.

Its subcellular location is the cytoplasm. In terms of biological role, N-acyltransferase required for nodulation. Acts in the production of a small, heat-stable compound (Nod) that stimulates mitosis in various plant protoplasts. The chain is Nodulation protein A from Sinorhizobium terangae.